A 146-amino-acid chain; its full sequence is Probable trivalent organoarsenical cleaving enzyme (146 aa).

In terms of domain architecture, VOC spans 2–118 (KYVHVGVNVV…DGNEWEFFYT (117 aa)). Fe(2+) is bound by residues His-5 and His-62. Positions 95 and 96 each coordinate roxarsone (III). Glu-114 contributes to the Fe(2+) binding site.

This sequence to M.tuberculosis Rv2641. Fe(2+) is required as a cofactor.

The enzyme catalyses methylarsonous acid + AH2 + O2 = arsenite + methanol + A + H(+). The catalysed reaction is roxarsone (III) + AH2 + O2 = 4-hydroxy-3-nitrocyclohexa-2,5-dien-1-one + arsenite + A + H(+). It catalyses the reaction nitarsone (III) + AH2 + O2 = 4-nitrocyclohexa-2,5-dien-1-one + arsenite + A + H(+). It carries out the reaction 4-aminophenylarsonous acid + AH2 + O2 = 4-aminocyclohexa-2,5-dien-1-one + arsenite + A. In terms of biological role, nonheme iron-dependent dioxygenase that can break carbon-arsenic bonds, playing a role in the detoxification of environmental organoarsenical compounds. Catalyzes the oxygen-dependent demethylation of highly toxic methylarsonous acid (MAs(III)) to arsenite, which can then be exported out of the cell. Can also cleave the C-As bond in several trivalent aromatic arsenicals, including roxarsone (III), nitarsone (III) and (4-aminophenyl)arsonous acid. Organoarsenical degradation by this enzyme is proposed to have a significant impact on the arsenic biogeocycle that maintains a balance between organic and inorganic species. This chain is Probable trivalent organoarsenical cleaving enzyme (yqcK), found in Bacillus subtilis (strain 168).